We begin with the raw amino-acid sequence, 806 residues long: DNA topoisomerase 4 subunit A (806 aa).

The Topo IIA-type catalytic domain occupies 33–499 (LPDARDGLKP…EEIKINLEVM (467 aa)). Residue tyrosine 121 is the O-(5'-phospho-DNA)-tyrosine intermediate of the active site.

Belongs to the type II topoisomerase GyrA/ParC subunit family. ParC type 2 subfamily. In terms of assembly, heterotetramer composed of ParC and ParE.

It localises to the cell membrane. The protein resides in the cytoplasm. It carries out the reaction ATP-dependent breakage, passage and rejoining of double-stranded DNA.. In terms of biological role, topoisomerase IV is essential for chromosome segregation. It relaxes supercoiled DNA. Performs the decatenation events required during the replication of a circular DNA molecule. In Bacillus subtilis (strain 168), this protein is DNA topoisomerase 4 subunit A.